The primary structure comprises 467 residues: Mothers against decapentaplegic homolog 9 (467 aa).

The MH1 domain maps to 16-140 (PAVKRLLGWK…YRRVETPVLP (125 aa)). Zn(2+) contacts are provided by Cys68, Cys113, Cys125, and His130. Residues 174-246 (NATYPDSFQQ…SETQSGQPVD (73 aa)) form a disordered region. Residues 205–220 (SYPHSPGSPSEPESPY) show a composition bias toward low complexity. The 195-residue stretch at 273-467 (WCSVAYYELN…SPHNPISSVS (195 aa)) folds into the MH2 domain.

It belongs to the dwarfin/SMAD family. As to quaternary structure, interaction with the co-SMAD SMAD4. Interacts with PEBP2-alpha subunit. Interacts with RANBP3L. Post-translationally, phosphorylated on serine by BMP (bone morphogenetic proteins) type 1 receptor kinase. In terms of tissue distribution, expressed in heart, brain, placenta, lung, skeletal muscle, prostate, testis, ovary and small intestine. Also expressed in fetal brain, lung and kidney.

Its subcellular location is the cytoplasm. It localises to the nucleus. Its function is as follows. Transcriptional modulator activated by BMP (bone morphogenetic proteins) type 1 receptor kinase. SMAD9 is a receptor-regulated SMAD (R-SMAD). This chain is Mothers against decapentaplegic homolog 9 (SMAD9), found in Homo sapiens (Human).